Reading from the N-terminus, the 251-residue chain is Type III pantothenate kinase (251 aa).

6-13 (DCGNSFIK) serves as a coordination point for ATP. Substrate contacts are provided by residues Tyr93 and 100–103 (GLDR). Asp102 functions as the Proton acceptor in the catalytic mechanism. Asp122 provides a ligand contact to K(+). Thr125 is an ATP binding site. Position 182 (Thr182) interacts with substrate.

It belongs to the type III pantothenate kinase family. As to quaternary structure, homodimer. Requires NH4(+) as cofactor. It depends on K(+) as a cofactor.

Its subcellular location is the cytoplasm. The enzyme catalyses (R)-pantothenate + ATP = (R)-4'-phosphopantothenate + ADP + H(+). The protein operates within cofactor biosynthesis; coenzyme A biosynthesis; CoA from (R)-pantothenate: step 1/5. Functionally, catalyzes the phosphorylation of pantothenate (Pan), the first step in CoA biosynthesis. In Azotobacter vinelandii (strain DJ / ATCC BAA-1303), this protein is Type III pantothenate kinase.